The following is a 450-amino-acid chain: ATP-dependent protease ATPase subunit HslU (450 aa).

Residues V29, 71 to 76 (GVGKTE), D261, E328, and R400 contribute to the ATP site.

This sequence belongs to the ClpX chaperone family. HslU subfamily. As to quaternary structure, a double ring-shaped homohexamer of HslV is capped on each side by a ring-shaped HslU homohexamer. The assembly of the HslU/HslV complex is dependent on binding of ATP.

The protein localises to the cytoplasm. ATPase subunit of a proteasome-like degradation complex; this subunit has chaperone activity. The binding of ATP and its subsequent hydrolysis by HslU are essential for unfolding of protein substrates subsequently hydrolyzed by HslV. HslU recognizes the N-terminal part of its protein substrates and unfolds these before they are guided to HslV for hydrolysis. The sequence is that of ATP-dependent protease ATPase subunit HslU from Rickettsia canadensis (strain McKiel).